Reading from the N-terminus, the 255-residue chain is Type III pantothenate kinase (255 aa).

6-13 (DVGNSYTM) contacts ATP. Position 107–110 (107–110 (GADR)) interacts with substrate. The active-site Proton acceptor is Asp109. Asp129 contacts K(+). Thr132 lines the ATP pocket. Position 183 (Thr183) interacts with substrate.

It belongs to the type III pantothenate kinase family. In terms of assembly, homodimer. The cofactor is NH4(+). Requires K(+) as cofactor.

It localises to the cytoplasm. The enzyme catalyses (R)-pantothenate + ATP = (R)-4'-phosphopantothenate + ADP + H(+). The protein operates within cofactor biosynthesis; coenzyme A biosynthesis; CoA from (R)-pantothenate: step 1/5. Its function is as follows. Catalyzes the phosphorylation of pantothenate (Pan), the first step in CoA biosynthesis. This Petrotoga mobilis (strain DSM 10674 / SJ95) protein is Type III pantothenate kinase.